A 421-amino-acid chain; its full sequence is F-box protein At2g17690 (421 aa).

Residues 2–50 form the F-box domain; the sequence is GDWSKLPEELLGLIALRLYSVIELIRFRSICKSWRSSASGVNKNHSLSS.

Involved in heat stress response. Contributes to recovery from heat stress. In Arabidopsis thaliana (Mouse-ear cress), this protein is F-box protein At2g17690.